Reading from the N-terminus, the 490-residue chain is Cytochrome P450 2C50 (490 aa).

The residue at position 127 (Ser127) is a Phosphoserine. An N6-acetyllysine mark is found at Lys249 and Lys375. A heme-binding site is contributed by Cys435.

The protein belongs to the cytochrome P450 family. It depends on heme as a cofactor. As to expression, expressed in heart and liver.

It is found in the endoplasmic reticulum membrane. The protein localises to the microsome membrane. It catalyses the reaction an organic molecule + reduced [NADPH--hemoprotein reductase] + O2 = an alcohol + oxidized [NADPH--hemoprotein reductase] + H2O + H(+). Functionally, metabolizes arachidonic acid to several midchain and omega-terminal hydroxyeicosatetraenoic acids (HETE). The sequence is that of Cytochrome P450 2C50 from Mus musculus (Mouse).